Consider the following 111-residue polypeptide: Large ribosomal subunit protein eL31 (111 aa).

The protein belongs to the eukaryotic ribosomal protein eL31 family.

This is Large ribosomal subunit protein eL31 (RPL31) from Encephalitozoon cuniculi (strain GB-M1) (Microsporidian parasite).